Consider the following 191-residue polypeptide: Protein Ves (191 aa).

It belongs to the Ves family.

This is Protein Ves from Escherichia coli O7:K1 (strain IAI39 / ExPEC).